A 344-amino-acid polypeptide reads, in one-letter code: GPALPP motifs-containing protein 1 (344 aa).

Positions 1–309 are disordered; it reads MARDLIGPAL…QERIPFDRDK (309 aa). Ala-2 carries the N-acetylalanine modification. A GPALPP motif 1 motif is present at residues 7–12; the sequence is GPALPP. At Ser-28 the chain carries Phosphoserine. The GPALPP motif 2 motif lies at 30 to 35; the sequence is GPALPP. 2 stretches are compositionally biased toward acidic residues: residues 58-67 and 80-93; these read GNQESEEDDT and DDND…DDDG. The GPALPP motif 3 motif lies at 96 to 101; the sequence is GPALPP. Ser-109 is subject to Phosphoserine. Pro residues predominate over residues 111-120; that stretch reads PRPIIGPALP. Residues 116–121 carry the GPALPP motif 4 motif; sequence GPALPP. Residues 128-137 show a composition bias toward basic and acidic residues; sequence QKSDKGRDDP. Thr-142 bears the Phosphothreonine mark. Ser-144 and Ser-145 each carry phosphoserine. Basic and acidic residues-rich tracts occupy residues 167–191, 231–265, 273–283, and 291–309; these read EFEK…KPIV, PADR…KRLA, ESKRSESLMDI, and KAAE…DRDK. Lys-275 participates in a covalent cross-link: Glycyl lysine isopeptide (Lys-Gly) (interchain with G-Cter in SUMO2). Lys-312 participates in a covalent cross-link: Glycyl lysine isopeptide (Lys-Gly) (interchain with G-Cter in SUMO2).

This is GPALPP motifs-containing protein 1 (GPALPP1) from Pongo abelii (Sumatran orangutan).